The chain runs to 340 residues: Cytochrome P450 monooxygenase cheG (340 aa).

Asn25 carries N-linked (GlcNAc...) asparagine glycosylation. The chain crosses the membrane as a helical span at residues 37–57 (MLLGIPTVILSLTPAVLRLLI). Cys283 contacts heme. Positions 308 to 340 (LPPGQGKPEKGSMPNGSMSPDTKAKVLFRSRKL) are disordered. An N-linked (GlcNAc...) asparagine glycan is attached at Asn322.

The protein belongs to the cytochrome P450 family. It depends on heme as a cofactor.

It localises to the membrane. It participates in secondary metabolite biosynthesis. Cytochrome P450 monooxygenase; part of the gene cluster that mediates the biosynthesis of chaetoglobosin A which has a unique inhibitory activity against actin polymerization in mammalian cells. Chaetoglobosin A and its intermediates are involved in the morphological differentiation of C.globosum. The first step of the pathway is the synthesis of prochaetoglobosin I via condensation of one acetyl-CoA, 8 malonyl-CoA, and a L-tryptophan molecule by the PKS-NRPS hybrid synthetase cheA, followed by reduction of backbone double bond to install desired geometry by the enoyl reductase cheB. Further multiple oxidation steps performed by the cytochrome P450 monooxygenases cheE and cheG, as well as by the FAD-linked oxidoreductase cheF, lead to the formation of chaetoglobosin A. Depending on the order of action of these reductases, distinct intermediates can be identified. Within the pathway, the cytochrome P450 monooxygenase cheE catalyzes a stereospecific epoxidation on prochaetoglobosin I, cytoglobosin D, and chaetoglobosin J intermediates. The FAD-linked oxidoreductase cheF performs dehydrogenation of the C-20 hydroxyl groups in the 20-dihyrochaetoglobosin A and cytoglobosin D intermediates. Finally, the cytochrome P450 monooxygenase cheG can catalyze the stereospecific dihydroxylation of prochaetoglobosin I and prochaetoglobosin IV at C-19 and C-20, respectively. The Diels-Alderase cheD may play a role in the post-PKS-NRPS biosynthetic steps catalyzing Diels-Alder cyclization. This is Cytochrome P450 monooxygenase cheG from Chaetomium globosum (strain ATCC 6205 / CBS 148.51 / DSM 1962 / NBRC 6347 / NRRL 1970) (Soil fungus).